We begin with the raw amino-acid sequence, 219 residues long: Elongation factor Ts (219 aa).

Residues 82–85 are involved in Mg(2+) ion dislocation from EF-Tu; that stretch reads TDFV.

It belongs to the EF-Ts family.

It localises to the cytoplasm. Associates with the EF-Tu.GDP complex and induces the exchange of GDP to GTP. It remains bound to the aminoacyl-tRNA.EF-Tu.GTP complex up to the GTP hydrolysis stage on the ribosome. This is Elongation factor Ts from Gloeobacter violaceus (strain ATCC 29082 / PCC 7421).